Here is a 333-residue protein sequence, read N- to C-terminus: uncharacterized protein (333 aa).

Positions 45–318 (NVIVSDSMFI…EYVKIIHPKI (274 aa)) constitute a Fe/B12 periplasmic-binding domain.

This is an uncharacterized protein from Methanocaldococcus jannaschii (strain ATCC 43067 / DSM 2661 / JAL-1 / JCM 10045 / NBRC 100440) (Methanococcus jannaschii).